Reading from the N-terminus, the 376-residue chain is Chaperone protein DnaJ (376 aa).

The region spanning 5–70 (DFYEVLGVER…SKRAAYDQYG (66 aa)) is the J domain. A CR-type zinc finger spans residues 135–213 (GTTVTIRVPT…CHGQGRVEEQ (79 aa)). Residues Cys148, Cys151, Cys165, Cys168, Cys187, Cys190, Cys201, and Cys204 each coordinate Zn(2+). 4 CXXCXGXG motif repeats span residues 148–155 (CKTCDGSG), 165–172 (CTTCGGIG), 187–194 (CPRCHGSG), and 201–208 (CGSCHGQG).

This sequence belongs to the DnaJ family. As to quaternary structure, homodimer. The cofactor is Zn(2+).

It localises to the cytoplasm. Participates actively in the response to hyperosmotic and heat shock by preventing the aggregation of stress-denatured proteins and by disaggregating proteins, also in an autonomous, DnaK-independent fashion. Unfolded proteins bind initially to DnaJ; upon interaction with the DnaJ-bound protein, DnaK hydrolyzes its bound ATP, resulting in the formation of a stable complex. GrpE releases ADP from DnaK; ATP binding to DnaK triggers the release of the substrate protein, thus completing the reaction cycle. Several rounds of ATP-dependent interactions between DnaJ, DnaK and GrpE are required for fully efficient folding. Also involved, together with DnaK and GrpE, in the DNA replication of plasmids through activation of initiation proteins. This Stutzerimonas stutzeri (Pseudomonas stutzeri) protein is Chaperone protein DnaJ.